Here is a 432-residue protein sequence, read N- to C-terminus: Putative D-alanyl-D-alanine carboxypeptidase (432 aa).

A helical; Signal-anchor transmembrane segment spans residues Ala-7–Leu-25.

Belongs to the peptidase S12 family. YfeW subfamily.

The protein localises to the cell inner membrane. It catalyses the reaction Preferential cleavage: (Ac)2-L-Lys-D-Ala-|-D-Ala. Also transpeptidation of peptidyl-alanyl moieties that are N-acyl substituents of D-alanine.. This Salmonella agona (strain SL483) protein is Putative D-alanyl-D-alanine carboxypeptidase.